The chain runs to 89 residues: UPF0298 protein GTNG_0961 (89 aa).

This sequence belongs to the UPF0298 family.

Its subcellular location is the cytoplasm. This chain is UPF0298 protein GTNG_0961, found in Geobacillus thermodenitrificans (strain NG80-2).